We begin with the raw amino-acid sequence, 402 residues long: Beta-ketoacyl-[acyl-carrier-protein] synthase III B, chloroplastic (402 aa).

Active-site residues include cysteine 178, histidine 328, and asparagine 358.

It belongs to the thiolase-like superfamily. FabH family.

The protein localises to the plastid. It is found in the chloroplast. It catalyses the reaction malonyl-[ACP] + acetyl-CoA + H(+) = 3-oxobutanoyl-[ACP] + CO2 + CoA. It participates in lipid metabolism; fatty acid biosynthesis. Functionally, catalyzes the condensation reaction of fatty acid synthesis by the addition to an acyl acceptor of two carbons from malonyl-ACP. KAS III catalyzes the first condensation reaction which initiates fatty acid synthesis and may therefore play a role in governing the total rate of fatty acid production. Possesses both acetoacetyl-ACP synthase and acetyl transacylase activities. In Cuphea wrightii (Wright's waxweed), this protein is Beta-ketoacyl-[acyl-carrier-protein] synthase III B, chloroplastic (KAS3B).